The following is a 333-amino-acid chain: MEERMVSAEAQTEEAAVEQGIRPHSFEQYIGQEKVKQNLKVFIEAAKMREEALDHVLLYGPPGLGKTTLSTIIANELGVQMRTTSGPAIERPGDLAAILTALEPGDVLFIDEIHRLNRMVEEVLYPAMEDYCIDIVIGKGPTARSVRLDLPPFTLVGATTRAGMLSSPLRDRFGVMARLEYYNVEELTTIIERTATIFDTELERDASIEIARRSRGTPRIANRLLRRVRDFAQVSGDMRISSSRAIESLERLQVDRLGLDHIDHKLIKGIMTKFNGGPVGLETISATIGEETDTIEEVYEPYLLQIGFLQRTPRGRVVTPLAYEHFNMEVPNK.

Residues 1–182 are large ATPase domain (RuvB-L); sequence MEERMVSAEA…FGVMARLEYY (182 aa). Residues I21, R22, G63, K66, T67, T68, 129-131, R172, Y182, and R219 contribute to the ATP site; that span reads EDY. A Mg(2+)-binding site is contributed by T67. The tract at residues 183-253 is small ATPAse domain (RuvB-S); that stretch reads NVEELTTIIE…RAIESLERLQ (71 aa). Residues 256–333 form a head domain (RuvB-H) region; that stretch reads RLGLDHIDHK…EHFNMEVPNK (78 aa). DNA is bound by residues R311 and R316.

This sequence belongs to the RuvB family. Homohexamer. Forms an RuvA(8)-RuvB(12)-Holliday junction (HJ) complex. HJ DNA is sandwiched between 2 RuvA tetramers; dsDNA enters through RuvA and exits via RuvB. An RuvB hexamer assembles on each DNA strand where it exits the tetramer. Each RuvB hexamer is contacted by two RuvA subunits (via domain III) on 2 adjacent RuvB subunits; this complex drives branch migration. In the full resolvosome a probable DNA-RuvA(4)-RuvB(12)-RuvC(2) complex forms which resolves the HJ.

It localises to the cytoplasm. The catalysed reaction is ATP + H2O = ADP + phosphate + H(+). In terms of biological role, the RuvA-RuvB-RuvC complex processes Holliday junction (HJ) DNA during genetic recombination and DNA repair, while the RuvA-RuvB complex plays an important role in the rescue of blocked DNA replication forks via replication fork reversal (RFR). RuvA specifically binds to HJ cruciform DNA, conferring on it an open structure. The RuvB hexamer acts as an ATP-dependent pump, pulling dsDNA into and through the RuvAB complex. RuvB forms 2 homohexamers on either side of HJ DNA bound by 1 or 2 RuvA tetramers; 4 subunits per hexamer contact DNA at a time. Coordinated motions by a converter formed by DNA-disengaged RuvB subunits stimulates ATP hydrolysis and nucleotide exchange. Immobilization of the converter enables RuvB to convert the ATP-contained energy into a lever motion, pulling 2 nucleotides of DNA out of the RuvA tetramer per ATP hydrolyzed, thus driving DNA branch migration. The RuvB motors rotate together with the DNA substrate, which together with the progressing nucleotide cycle form the mechanistic basis for DNA recombination by continuous HJ branch migration. Branch migration allows RuvC to scan DNA until it finds its consensus sequence, where it cleaves and resolves cruciform DNA. This chain is Holliday junction branch migration complex subunit RuvB, found in Halalkalibacterium halodurans (strain ATCC BAA-125 / DSM 18197 / FERM 7344 / JCM 9153 / C-125) (Bacillus halodurans).